The sequence spans 100 residues: Integration host factor subunit alpha (100 aa).

It belongs to the bacterial histone-like protein family. Heterodimer of an alpha and a beta chain.

This protein is one of the two subunits of integration host factor, a specific DNA-binding protein that functions in genetic recombination as well as in transcriptional and translational control. This is Integration host factor subunit alpha from Phenylobacterium zucineum (strain HLK1).